We begin with the raw amino-acid sequence, 130 residues long: Small ribosomal subunit protein uS11 (130 aa).

The protein belongs to the universal ribosomal protein uS11 family. Part of the 30S ribosomal subunit.

In terms of biological role, located on the platform of the 30S subunit. This is Small ribosomal subunit protein uS11 from Nanoarchaeum equitans (strain Kin4-M).